A 198-amino-acid polypeptide reads, in one-letter code: ATP-dependent Clp protease proteolytic subunit (198 aa).

S98 acts as the Nucleophile in catalysis. H123 is an active-site residue.

Belongs to the peptidase S14 family. Fourteen ClpP subunits assemble into 2 heptameric rings which stack back to back to give a disk-like structure with a central cavity, resembling the structure of eukaryotic proteasomes.

It is found in the cytoplasm. It catalyses the reaction Hydrolysis of proteins to small peptides in the presence of ATP and magnesium. alpha-casein is the usual test substrate. In the absence of ATP, only oligopeptides shorter than five residues are hydrolyzed (such as succinyl-Leu-Tyr-|-NHMec, and Leu-Tyr-Leu-|-Tyr-Trp, in which cleavage of the -Tyr-|-Leu- and -Tyr-|-Trp bonds also occurs).. Functionally, cleaves peptides in various proteins in a process that requires ATP hydrolysis. Has a chymotrypsin-like activity. Plays a major role in the degradation of misfolded proteins. This chain is ATP-dependent Clp protease proteolytic subunit, found in Listeria innocua serovar 6a (strain ATCC BAA-680 / CLIP 11262).